The chain runs to 315 residues: Cysteine proteinase 2 (315 aa).

Residues 1 to 13 (MFAFICLLAIASA) form the signal peptide. The propeptide at 14–93 (IDFNTWASKN…NGQVKYLNIQ (80 aa)) is activation peptide. Cystine bridges form between Cys115–Cys161 and Cys152–Cys193. Residue Cys118 is part of the active site. Active-site residues include His259 and Asn279.

It belongs to the peptidase C1 family. In terms of assembly, interacts with cysteine protease inhibitor ICP1. Interacts with cysteine protease inhibitor ICP2.

Its subcellular location is the cell membrane. The protein resides in the cytoplasmic vesicle. The protein localises to the phagosome. It localises to the secreted. The enzyme catalyses Hydrolysis of proteins, including basement membrane collagen and azocasein. Preferential cleavage: Arg-Arg-|-Xaa in small molecule substrates including Z-Arg-Arg-|-NHMec.. Its activity is regulated as follows. Inhibited by cysteine protease inhibitors ICP1 and ICP2. Inhibited by leupeptin and such inhibitors of cysteine proteinases as L-transepoxysuccinyl-L-leucylamido-(4-guanidino)butane, peptidyldiazomethanes, iodoacetic acid and chicken cystatin. Its function is as follows. Cysteine protease which degrades matrix proteins such as collagen, laminin and fibronectin and thus is involved in the destruction of human tissue. Can abolish adhesion. May play an important role in pathogenicity. This is Cysteine proteinase 2 from Entamoeba histolytica (strain ATCC 30459 / HM-1:IMSS / ABRM).